We begin with the raw amino-acid sequence, 55 residues long: Large ribosomal subunit protein bL33 (55 aa).

This sequence belongs to the bacterial ribosomal protein bL33 family.

In Bradyrhizobium sp. (strain BTAi1 / ATCC BAA-1182), this protein is Large ribosomal subunit protein bL33.